We begin with the raw amino-acid sequence, 249 residues long: Flavin-dependent thymidylate synthase (249 aa).

The ThyX domain maps to 8–225 (VKVKLLEYTP…PNLFKYSGPS (218 aa)). FAD is bound by residues serine 62, 86-88 (RHR), and glutamine 94. DUMP-binding positions include 83 to 86 (QLVR), 94 to 98 (QQSQR), and arginine 164. The short motif at 86-96 (RHRIASYSQQS) is the ThyX motif element. Residues 180-182 (NAR) and asparagine 186 each bind FAD. Residue arginine 191 coordinates dUMP. Arginine 191 functions as the Involved in ionization of N3 of dUMP, leading to its activation in the catalytic mechanism.

It belongs to the thymidylate synthase ThyX family. Homotetramer. FAD serves as cofactor.

It catalyses the reaction dUMP + (6R)-5,10-methylene-5,6,7,8-tetrahydrofolate + NADPH + H(+) = dTMP + (6S)-5,6,7,8-tetrahydrofolate + NADP(+). It functions in the pathway pyrimidine metabolism; dTTP biosynthesis. In terms of biological role, catalyzes the reductive methylation of 2'-deoxyuridine-5'-monophosphate (dUMP) to 2'-deoxythymidine-5'-monophosphate (dTMP) while utilizing 5,10-methylenetetrahydrofolate (mTHF) as the methyl donor, and NADPH and FADH(2) as the reductant. This Clostridium tetani (strain Massachusetts / E88) protein is Flavin-dependent thymidylate synthase.